A 1755-amino-acid chain; its full sequence is Transposon Ty1-LR3 Gag-Pol polyprotein (1755 aa).

Residues 1 to 16 are compositionally biased toward low complexity; it reads MESQQLSQHSHISHGS. Disordered stretches follow at residues 1–93, 126–173, and 352–421; these read MESQ…MMTQ, PQSQ…RPPP, and GSRN…SKST. Composition is skewed to polar residues over residues 48–60 and 127–152; these read TKAN…TPAS and QSQF…GNTF. Residues 153-165 show a composition bias toward low complexity; the sequence is TDSSSADSDMTST. The interval 299 to 401 is RNA-binding; it reads NNGIHINNKV…NSKSKTARAH (103 aa). The span at 402 to 418 shows a compositional bias: low complexity; sequence NVSTSNNSPSTDNDSIS. At Ser416 the chain carries Phosphoserine. Catalysis depends on Asp461, which acts as the For protease activity; shared with dimeric partner. Positions 583–640 are integrase-type zinc finger-like; it reads NVHTSESTRKYPYPFIHRMLAHANAQTIRYSLKNNTITYFNESDVDWSSAIDYQCPDC. The region spanning 660 to 829 is the Integrase catalytic domain; sequence NSYEPFQYLH…SQHAGLAGLD (170 aa). Asp671 and Asp736 together coordinate Mg(2+). 3 disordered regions span residues 956-1087, 1092-1111, and 1129-1172; these read SKAV…ETEK, RSPS…NIVP, and ADLP…SNAY. Positions 960–969 are enriched in low complexity; the sequence is SPTDSTPPST. Residues 1005–1015 are compositionally biased toward polar residues; sequence STPQISNIEST. The segment covering 1038–1052 has biased composition (basic and acidic residues); that stretch reads ESSHASKSKDFRHSD. Composition is skewed to polar residues over residues 1053–1082 and 1101–1111; these read SYSN…QISD and PENNSSHNIVP. Residues 1178–1212 carry the Bipartite nuclear localization signal motif; sequence KKRSLEDNETEIKVSRDTWNTKNMRSLEPPRSKKR. Positions 1338 to 1476 constitute a Reverse transcriptase Ty1/copia-type domain; the sequence is NNYYITQLDI…DILGLEIKYQ (139 aa). Mg(2+) is bound by residues Asp1346, Asp1427, Asp1428, Asp1610, Glu1652, and Asp1685. Residues 1610–1752 form the RNase H Ty1/copia-type domain; sequence DASYGNQPYY…IKTFKLLTNK (143 aa).

As to quaternary structure, the capsid protein forms a homotrimer, from which the VLPs are assembled. The protease is a homodimer, whose active site consists of two apposed aspartic acid residues. Initially, virus-like particles (VLPs) are composed of the structural unprocessed proteins Gag and Gag-Pol, and also contain the host initiator methionine tRNA (tRNA(i)-Met) which serves as a primer for minus-strand DNA synthesis, and a dimer of genomic Ty RNA. Processing of the polyproteins occurs within the particle and proceeds by an ordered pathway, called maturation. First, the protease (PR) is released by autocatalytic cleavage of the Gag-Pol polyprotein yielding capsid protein p45 and a Pol-p154 precursor protein. This cleavage is a prerequisite for subsequent processing of Pol-p154 at the remaining sites to release the mature structural and catalytic proteins. Maturation takes place prior to the RT reaction and is required to produce transposition-competent VLPs.

The protein resides in the cytoplasm. The protein localises to the nucleus. It catalyses the reaction DNA(n) + a 2'-deoxyribonucleoside 5'-triphosphate = DNA(n+1) + diphosphate. The catalysed reaction is Endonucleolytic cleavage to 5'-phosphomonoester.. Capsid protein (CA) is the structural component of the virus-like particle (VLP), forming the shell that encapsulates the retrotransposons dimeric RNA genome. The particles are assembled from trimer-clustered units and there are holes in the capsid shells that allow for the diffusion of macromolecules. CA also has nucleocapsid-like chaperone activity, promoting primer tRNA(i)-Met annealing to the multipartite primer-binding site (PBS), dimerization of Ty1 RNA and initiation of reverse transcription. Functionally, the aspartyl protease (PR) mediates the proteolytic cleavages of the Gag and Gag-Pol polyproteins after assembly of the VLP. Its function is as follows. Reverse transcriptase/ribonuclease H (RT) is a multifunctional enzyme that catalyzes the conversion of the retro-elements RNA genome into dsDNA within the VLP. The enzyme displays a DNA polymerase activity that can copy either DNA or RNA templates, and a ribonuclease H (RNase H) activity that cleaves the RNA strand of RNA-DNA heteroduplexes during plus-strand synthesis and hydrolyzes RNA primers. The conversion leads to a linear dsDNA copy of the retrotransposon that includes long terminal repeats (LTRs) at both ends. In terms of biological role, integrase (IN) targets the VLP to the nucleus, where a subparticle preintegration complex (PIC) containing at least integrase and the newly synthesized dsDNA copy of the retrotransposon must transit the nuclear membrane. Once in the nucleus, integrase performs the integration of the dsDNA into the host genome. In Saccharomyces cerevisiae (strain ATCC 204508 / S288c) (Baker's yeast), this protein is Transposon Ty1-LR3 Gag-Pol polyprotein (TY1B-LR3).